The sequence spans 109 residues: Small ribosomal subunit protein eS25 (109 aa).

Basic and acidic residues predominate over residues 1–13 (MVKKIQESKEKKA). A disordered region spans residues 1 to 34 (MVKKIQESKEKKALKAASGTRKDKKKWGDGRKKE).

This sequence belongs to the eukaryotic ribosomal protein eS25 family.

The polypeptide is Small ribosomal subunit protein eS25 (RPS25-1) (Encephalitozoon cuniculi (strain GB-M1) (Microsporidian parasite)).